Here is a 434-residue protein sequence, read N- to C-terminus: Sodium/bile acid cotransporter 5 (434 aa).

Residues 1-18 (MSGKLFIILLLLVTPGEA) form the signal peptide. Residues 19-129 (RKSFLRFLNI…VSVFRQTEDS (111 aa)) lie on the Extracellular side of the membrane. 2 N-linked (GlcNAc...) asparagine glycosylation sites follow: N73 and N96. The helical transmembrane segment at 130-150 (LFQEPIHVNSSVFLLVLLMIL) threads the bilayer. Residues 151–172 (LNKCAFGCKIELQVLQTVWKRP) are Cytoplasmic-facing. The chain crosses the membrane as a helical span at residues 173–193 (LPILLGAVTQFFLMPFCGFLL). The Extracellular segment spans residues 194 to 195 (SQ). The chain crosses the membrane as a helical span at residues 196 to 216 (ILGLSKAQAFGFVMTCTCPGG). Residues 217-232 (GGGYLFALLLEGDVTL) lie on the Cytoplasmic side of the membrane. The helical transmembrane segment at 233 to 255 (AILMACTSTSLALIMMPVNSYLY) threads the bilayer. Over 256-268 (SCLLGLAGVFHVP) the chain is Extracellular. Residues 269–289 (VLKIVSTLLFILTPVSIGIVI) traverse the membrane as a helical segment. The Cytoplasmic segment spans residues 290–306 (KHRMPKKAVCLERVVQP). A helical membrane pass occupies residues 307–327 (LSLTLMLVGVYLAFRMGLVFL). Topologically, residues 328-331 (RMAN) are extracellular. The chain crosses the membrane as a helical span at residues 332 to 352 (LEVFLLGLLVPVLGFSFGYSF). Residues 353–365 (AKVYLLPLPVCKT) lie on the Cytoplasmic side of the membrane. The helical transmembrane segment at 366 to 386 (VAIESGMLNSFLALAIIQLSF) threads the bilayer. Residues 387–395 (PQSKAYEAS) lie on the Extracellular side of the membrane. A helical membrane pass occupies residues 396–416 (VAPFTVAMCSSCEMLLLLLVY). Residues 417 to 434 (KAKKRPLLSTENEKAPLV) are Cytoplasmic-facing.

The protein belongs to the bile acid:sodium symporter (BASS) (TC 2.A.28) family.

The protein resides in the membrane. This Rattus norvegicus (Rat) protein is Sodium/bile acid cotransporter 5 (Slc10a5).